A 620-amino-acid chain; its full sequence is Protein NRT1/ PTR FAMILY 2.13 (620 aa).

Residues 1-32 (MVLEDRKDGSSLPGRSGSFSKSSPSELDVVDP) form a disordered region. Residues 10–25 (SSLPGRSGSFSKSSPS) are compositionally biased toward low complexity. The next 12 helical transmembrane spans lie at 70-90 (LGSI…FHLE), 95-115 (ANVI…GAYI), 126-146 (IAFA…TASF), 167-187 (KLQI…SGGI), 213-233 (FFNW…TVVV), 241-261 (WIIG…MFFA), 364-384 (IVPI…QGTF), 402-422 (IPAG…LPFY), 443-463 (LQRI…AGIV), 485-505 (VFWL…NIIG), 524-544 (SLFS…VTVV), and 568-588 (YFYY…WYCA).

Belongs to the major facilitator superfamily. Proton-dependent oligopeptide transporter (POT/PTR) (TC 2.A.17) family. Interacts with NLA. Post-translationally, ubiquitinated by NLA. Ubiquitination of NPF2.13 leads to its degradation by the proteasome. As to expression, expressed in leaves and flowers. Detected in stems and siliques. Highest expression in the distal lamina of older leaves. Restricted to the sieve element and companion cell complex of the minor vein.

Its subcellular location is the cell membrane. In terms of biological role, low-affinity proton-dependent nitrate transporter. Not involved in dipeptides transport, but has a weak glucosinolate transport activity. Involved in phloem loading and nitrate remobilization from the older leaves to other tissues. In Arabidopsis thaliana (Mouse-ear cress), this protein is Protein NRT1/ PTR FAMILY 2.13 (NPF2.13).